Consider the following 877-residue polypeptide: Phosphoenolpyruvate carboxylase (877 aa).

Catalysis depends on residues H138 and K544.

This sequence belongs to the PEPCase type 1 family. It depends on Mg(2+) as a cofactor.

It catalyses the reaction oxaloacetate + phosphate = phosphoenolpyruvate + hydrogencarbonate. Its function is as follows. Forms oxaloacetate, a four-carbon dicarboxylic acid source for the tricarboxylic acid cycle. In Vibrio vulnificus (strain CMCP6), this protein is Phosphoenolpyruvate carboxylase.